The primary structure comprises 676 residues: Maternal embryonic leucine zipper kinase (676 aa).

The Protein kinase domain maps to 13–265; that stretch reads YEVYETIGSG…VKHLLDHPWV (253 aa). ATP is bound by residues 19–27 and Lys42; that span reads IGSGGFAKV. The Proton acceptor role is filled by Asp134. Residue Thr169 is modified to Phosphothreonine; by autocatalysis. Position 173 is a phosphoserine; by autocatalysis (Ser173). The UBA-like stretch occupies residues 284 to 323; that stretch reads IDEDCITEMAVTFKQSKQRTIQLVSEWKYDQITATYLLLL. The tract at residues 328–673 is autoinhibitory region; the sequence is QGRPVRLRAE…VEDILSSSSQ (346 aa). Residues 423–443 show a composition bias toward basic and acidic residues; that stretch reads EHSRPCRQKPERRERTKENKE. The disordered stretch occupies residues 423–518; sequence EHSRPCRQKP…QQNGQQGELN (96 aa). Polar residues predominate over residues 462-489; that stretch reads TPTSSRKVKSNRTVMTTPNHNNNKSSEV. Positions 508–518 are enriched in low complexity; that stretch reads QQQNGQQGELN. The region spanning 624-673 is the KA1 domain; it reads SDFGKVTMQFELEVCLLQKPEVVGIRRQRLKGDAWVYKHLVEDILSSSSQ.

The protein belongs to the protein kinase superfamily. CAMK Ser/Thr protein kinase family. SNF1 subfamily. Autophosphorylated: autophosphorylation of the T-loop at Thr-169 and Ser-173 is required for activation. As to expression, strongly expressed in the eye, gill, kidney, spleen, muscle, ovary and testis and weakly in the heart, liver, and gut. Expressed in the brain and lateral mesoderm at 12 hours post-fertilization (hpf).

The protein resides in the cell membrane. The catalysed reaction is L-seryl-[protein] + ATP = O-phospho-L-seryl-[protein] + ADP + H(+). It carries out the reaction L-threonyl-[protein] + ATP = O-phospho-L-threonyl-[protein] + ADP + H(+). Activated by autophosphorylation of the T-loop at Thr-169 and Ser-173: in contrast to other members of the SNF1 subfamily, phosphorylation at Thr-169 is not mediated by STK11/LKB1 but via autophosphorylation instead. In terms of biological role, serine/threonine-protein kinase involved in various processes such as cell cycle regulation, self-renewal of stem cells, apoptosis and splicing regulation. Also plays a role in primitive hematopoiesis, possibly by affecting the expression of genes critical for hematopoiesis. The polypeptide is Maternal embryonic leucine zipper kinase (melk) (Danio rerio (Zebrafish)).